A 136-amino-acid polypeptide reads, in one-letter code: Ig kappa chain V-V region MOPC 21 (136 aa).

A signal peptide spans Met-1–Gly-29. The interval Asn-30–Cys-52 is framework-1. Residues Lys-53–Ser-63 form a complementarity-determining-1 region. Residues Trp-64–Tyr-78 form a framework-2 region. Positions Gly-79–Thr-85 are complementarity-determining-2. The segment at Gly-86–Cys-117 is framework-3. The segment at Gly-118–Thr-126 is complementarity-determining-3. Residues Phe-127–Lys-136 form a framework-4 region.

The polypeptide is Ig kappa chain V-V region MOPC 21 (Mus musculus (Mouse)).